Consider the following 185-residue polypeptide: Ribosome-recycling factor (185 aa).

The segment at 137–159 (EDLKADEKAKDISEDDRKRMEDE) is disordered.

The protein belongs to the RRF family.

It is found in the cytoplasm. In terms of biological role, responsible for the release of ribosomes from messenger RNA at the termination of protein biosynthesis. May increase the efficiency of translation by recycling ribosomes from one round of translation to another. In Erythrobacter litoralis (strain HTCC2594), this protein is Ribosome-recycling factor.